The following is a 413-amino-acid chain: MKGSNTFRWAIAIGVVVAAAAFWFWHSRSESPTAAPGVAAQAPHTASAGRRGMRDGPLAPVQAATATTQAVPRYLSGLGTVTAANTVTVRSRVDGQLIALHFQEGQQVNAGDLLAQIDPSQFKVALAQAQGQLAKDNATLANARRDLARYQQLAKTNLVSRQELDAQQALVNETQGTIKADEANVASAQLQLDWSRITAPVSGRVGLKQVDVGNQISSSDTAGIVVITQTHPIDLIFTLPESDIATVVQAQKAGKALVVEAWDRTNSHKLSEGVLLSLDNQIDPTTGTIKIKARFTNQDDTLFPNQFVNARMLVDTEQNAVVVPAAAVQMGNEGHFVWVLNDENNVSKKRVKIGIQDNRNVVISAGLSAGDRVVTDGIDRLTEGAKVEVVEPQTTVADEKSPSRHEGQKGARA.

The signal sequence occupies residues 1 to 20 (MKGSNTFRWAIAIGVVVAAA). 2 disordered regions span residues 31–57 (SPTAAPGVAAQAPHTASAGRRGMRDGP) and 391–413 (EPQTTVADEKSPSRHEGQKGARA). Over residues 397–413 (ADEKSPSRHEGQKGARA) the composition is skewed to basic and acidic residues.

This sequence belongs to the membrane fusion protein (MFP) (TC 8.A.1) family. Part of a tripartite efflux system composed of MdtA, MdtB and MdtC.

Its subcellular location is the cell inner membrane. This chain is Multidrug resistance protein MdtA, found in Salmonella typhimurium (strain LT2 / SGSC1412 / ATCC 700720).